The primary structure comprises 102 residues: Large ribosomal subunit protein uL24 (102 aa).

This sequence belongs to the universal ribosomal protein uL24 family. In terms of assembly, part of the 50S ribosomal subunit.

Its function is as follows. One of two assembly initiator proteins, it binds directly to the 5'-end of the 23S rRNA, where it nucleates assembly of the 50S subunit. Functionally, one of the proteins that surrounds the polypeptide exit tunnel on the outside of the subunit. This chain is Large ribosomal subunit protein uL24, found in Rhizobium rhizogenes (strain K84 / ATCC BAA-868) (Agrobacterium radiobacter).